The sequence spans 155 residues: Small ribosomal subunit protein uS7cz/uS7cy (155 aa).

It belongs to the universal ribosomal protein uS7 family. Part of the 30S ribosomal subunit.

The protein localises to the plastid. It is found in the chloroplast. Functionally, one of the primary rRNA binding proteins, it binds directly to 16S rRNA where it nucleates assembly of the head domain of the 30S subunit. This chain is Small ribosomal subunit protein uS7cz/uS7cy (rps7-A), found in Nymphaea alba (White water-lily).